The chain runs to 355 residues: UDP-N-acetylglucosamine--N-acetylmuramyl-(pentapeptide) pyrophosphoryl-undecaprenol N-acetylglucosamine transferase (355 aa).

UDP-N-acetyl-alpha-D-glucosamine-binding positions include T15–G17, N127, R163, S191, I244, A263–E268, and Q288.

It belongs to the glycosyltransferase 28 family. MurG subfamily.

Its subcellular location is the cell inner membrane. It carries out the reaction di-trans,octa-cis-undecaprenyl diphospho-N-acetyl-alpha-D-muramoyl-L-alanyl-D-glutamyl-meso-2,6-diaminopimeloyl-D-alanyl-D-alanine + UDP-N-acetyl-alpha-D-glucosamine = di-trans,octa-cis-undecaprenyl diphospho-[N-acetyl-alpha-D-glucosaminyl-(1-&gt;4)]-N-acetyl-alpha-D-muramoyl-L-alanyl-D-glutamyl-meso-2,6-diaminopimeloyl-D-alanyl-D-alanine + UDP + H(+). The protein operates within cell wall biogenesis; peptidoglycan biosynthesis. Cell wall formation. Catalyzes the transfer of a GlcNAc subunit on undecaprenyl-pyrophosphoryl-MurNAc-pentapeptide (lipid intermediate I) to form undecaprenyl-pyrophosphoryl-MurNAc-(pentapeptide)GlcNAc (lipid intermediate II). This is UDP-N-acetylglucosamine--N-acetylmuramyl-(pentapeptide) pyrophosphoryl-undecaprenol N-acetylglucosamine transferase from Salmonella arizonae (strain ATCC BAA-731 / CDC346-86 / RSK2980).